The sequence spans 339 residues: Lipoyl synthase (339 aa).

Positions 13–35 (RPKLDAPARPRHPEKAHRPDTAI) are disordered. Residues Cys68, Cys73, Cys79, Cys94, Cys98, Cys101, and Ser307 each contribute to the [4Fe-4S] cluster site. A Radical SAM core domain is found at 80 to 296 (WEKRHATFMI…ETTAYAKGFL (217 aa)).

This sequence belongs to the radical SAM superfamily. Lipoyl synthase family. [4Fe-4S] cluster is required as a cofactor.

The protein resides in the cytoplasm. The catalysed reaction is [[Fe-S] cluster scaffold protein carrying a second [4Fe-4S](2+) cluster] + N(6)-octanoyl-L-lysyl-[protein] + 2 oxidized [2Fe-2S]-[ferredoxin] + 2 S-adenosyl-L-methionine + 4 H(+) = [[Fe-S] cluster scaffold protein] + N(6)-[(R)-dihydrolipoyl]-L-lysyl-[protein] + 4 Fe(3+) + 2 hydrogen sulfide + 2 5'-deoxyadenosine + 2 L-methionine + 2 reduced [2Fe-2S]-[ferredoxin]. It functions in the pathway protein modification; protein lipoylation via endogenous pathway; protein N(6)-(lipoyl)lysine from octanoyl-[acyl-carrier-protein]: step 2/2. In terms of biological role, catalyzes the radical-mediated insertion of two sulfur atoms into the C-6 and C-8 positions of the octanoyl moiety bound to the lipoyl domains of lipoate-dependent enzymes, thereby converting the octanoylated domains into lipoylated derivatives. The protein is Lipoyl synthase of Methylorubrum extorquens (strain PA1) (Methylobacterium extorquens).